The following is a 436-amino-acid chain: GTPase Der (436 aa).

EngA-type G domains lie at 4 to 167 and 174 to 350; these read PVVA…PEVE and VRVA…EQRT. GTP is bound by residues 10 to 17, 57 to 61, 120 to 123, 180 to 187, 227 to 231, and 292 to 295; these read GRPNVGKS, DTGGL, NKVD, DTAGL, and NKWD. Positions 351–435 constitute a KH-like domain; it reads RRISTSEVND…PLRIILRRKN (85 aa).

Belongs to the TRAFAC class TrmE-Era-EngA-EngB-Septin-like GTPase superfamily. EngA (Der) GTPase family. As to quaternary structure, associates with the 50S ribosomal subunit.

In terms of biological role, GTPase that plays an essential role in the late steps of ribosome biogenesis. This is GTPase Der from Gemmatimonas aurantiaca (strain DSM 14586 / JCM 11422 / NBRC 100505 / T-27).